The primary structure comprises 158 residues: Transcription elongation factor GreA (158 aa).

This sequence belongs to the GreA/GreB family.

Necessary for efficient RNA polymerase transcription elongation past template-encoded arresting sites. The arresting sites in DNA have the property of trapping a certain fraction of elongating RNA polymerases that pass through, resulting in locked ternary complexes. Cleavage of the nascent transcript by cleavage factors such as GreA or GreB allows the resumption of elongation from the new 3'terminus. GreA releases sequences of 2 to 3 nucleotides. The sequence is that of Transcription elongation factor GreA from Rhizobium johnstonii (strain DSM 114642 / LMG 32736 / 3841) (Rhizobium leguminosarum bv. viciae).